We begin with the raw amino-acid sequence, 121 residues long: Two-component response regulator ORR8 (121 aa).

The region spanning 5 to 121 (HVLVVDDTHV…VDVPRIMKYI (117 aa)) is the Response regulatory domain. Asp-55 is modified (4-aspartylphosphate).

This sequence belongs to the ARR family. Type-A subfamily. In terms of processing, two-component system major event consists of a His-to-Asp phosphorelay between a sensor histidine kinase (HK) and a response regulator (RR). In plants, the His-to-Asp phosphorelay involves an additional intermediate named Histidine-containing phosphotransfer protein (HPt). This multistep phosphorelay consists of a His-Asp-His-Asp sequential transfer of a phosphate group between first a His and an Asp of the HK protein, followed by the transfer to a conserved His of the HPt protein and finally the transfer to an Asp in the receiver domain of the RR protein. Expressed in mature leaves, and at low levels in roots, shoots and flowers.

Functionally, functions as a response regulator involved in His-to-Asp phosphorelay signal transduction system. Phosphorylation of the Asp residue in the receiver domain activates the ability of the protein to promote the transcription of target genes. Type-A response regulators seem to act as negative regulators of the cytokinin signaling. This chain is Two-component response regulator ORR8, found in Oryza sativa subsp. indica (Rice).